A 90-amino-acid polypeptide reads, in one-letter code: Small ribosomal subunit protein bS18 (90 aa).

It belongs to the bacterial ribosomal protein bS18 family. As to quaternary structure, part of the 30S ribosomal subunit. Forms a tight heterodimer with protein bS6.

In terms of biological role, binds as a heterodimer with protein bS6 to the central domain of the 16S rRNA, where it helps stabilize the platform of the 30S subunit. In Bordetella avium (strain 197N), this protein is Small ribosomal subunit protein bS18.